Consider the following 388-residue polypeptide: Succinate--CoA ligase [ADP-forming] subunit beta (388 aa).

ATP contacts are provided by residues K46, G53–G55, E99, C102, and E107. The Mg(2+) site is built by N199 and D213. Substrate-binding positions include N264 and G321 to V323.

The protein belongs to the succinate/malate CoA ligase beta subunit family. As to quaternary structure, heterotetramer of two alpha and two beta subunits. Mg(2+) serves as cofactor.

It carries out the reaction succinate + ATP + CoA = succinyl-CoA + ADP + phosphate. The catalysed reaction is GTP + succinate + CoA = succinyl-CoA + GDP + phosphate. The protein operates within carbohydrate metabolism; tricarboxylic acid cycle; succinate from succinyl-CoA (ligase route): step 1/1. Its function is as follows. Succinyl-CoA synthetase functions in the citric acid cycle (TCA), coupling the hydrolysis of succinyl-CoA to the synthesis of either ATP or GTP and thus represents the only step of substrate-level phosphorylation in the TCA. The beta subunit provides nucleotide specificity of the enzyme and binds the substrate succinate, while the binding sites for coenzyme A and phosphate are found in the alpha subunit. This Actinobacillus pleuropneumoniae serotype 7 (strain AP76) protein is Succinate--CoA ligase [ADP-forming] subunit beta.